A 135-amino-acid polypeptide reads, in one-letter code: Large ribosomal subunit protein uL16 (135 aa).

Belongs to the universal ribosomal protein uL16 family. As to quaternary structure, part of the 50S ribosomal subunit.

In terms of biological role, binds 23S rRNA and is also seen to make contacts with the A and possibly P site tRNAs. The chain is Large ribosomal subunit protein uL16 from Desulforapulum autotrophicum (strain ATCC 43914 / DSM 3382 / VKM B-1955 / HRM2) (Desulfobacterium autotrophicum).